Reading from the N-terminus, the 574-residue chain is Ankyrin repeat protein B18 (574 aa).

ANK repeat units follow at residues 56-87 (TGYT…NVTM), 135-164 (IKSR…DPNF), 167-213 (DGYT…NLNA), 217-249 (CGNT…NFKI), 253-285 (HGLT…NVGE), and 327-356 (EGKT…DINA). One can recognise an F-box domain in the interval 541 to 574 (NCLLTLLPSEIIYEILYMLTINDLYNISYPPTKV).

The protein is Ankyrin repeat protein B18 of Homo sapiens (Human).